A 298-amino-acid polypeptide reads, in one-letter code: Protein Bel-1 (298 aa).

Residues 1–17 (MASWEKEKELAHLHQPE) are compositionally biased toward basic and acidic residues. Residues 1 to 46 (MASWEKEKELAHLHQPEDDPLPDLSLLLDMDQFEPTEGPDSNPGAE) form a disordered region. The DNA-binding element occupies 91–200 (SKWACARLIL…GEPLKPRVRA (110 aa)). Residues 214 to 223 (ADRPKRSRWG) carry the Nuclear localization signal motif. Residues 225–298 (APREQPNTSS…SGPPTGPSEN (74 aa)) form a transactivation domain region.

In terms of assembly, homodimer or homomultimer. Forms complexes with the host nuclear factors NFIA, NFIB, NFIC or NFIX.

The protein localises to the host nucleus. Transcriptional transactivator that activates the viral internal promoter (IP), thereby enhancing its own expression. This transactivation is repressed by nuclear factor I. Also transactivates the long terminal repeat (LTR) promoter, thereby inducing structural gene expression, initiating the late phase of infection. It is therefore a key regulator of viral gene expression. It directly binds to and activates DNA target sites of viral promoters and those of distinct cellular genes. Required for viral replication. This chain is Protein Bel-1 (bel1), found in Chlorocebus aethiops (Green monkey).